A 406-amino-acid polypeptide reads, in one-letter code: Phosphopentomutase (406 aa).

Mn(2+) is bound by residues Asp-10, Asp-305, His-310, Asp-346, His-347, and His-358.

This sequence belongs to the phosphopentomutase family. Mn(2+) is required as a cofactor.

The protein localises to the cytoplasm. The catalysed reaction is 2-deoxy-alpha-D-ribose 1-phosphate = 2-deoxy-D-ribose 5-phosphate. It catalyses the reaction alpha-D-ribose 1-phosphate = D-ribose 5-phosphate. The protein operates within carbohydrate degradation; 2-deoxy-D-ribose 1-phosphate degradation; D-glyceraldehyde 3-phosphate and acetaldehyde from 2-deoxy-alpha-D-ribose 1-phosphate: step 1/2. Isomerase that catalyzes the conversion of deoxy-ribose 1-phosphate (dRib-1-P) and ribose 1-phosphate (Rib-1-P) to deoxy-ribose 5-phosphate (dRib-5-P) and ribose 5-phosphate (Rib-5-P), respectively. This chain is Phosphopentomutase, found in Photobacterium profundum (strain SS9).